The primary structure comprises 389 residues: Cellobiose 2-epimerase (389 aa).

Belongs to the cellobiose 2-epimerase family.

Its subcellular location is the cytoplasm. It catalyses the reaction D-cellobiose = beta-D-glucosyl-(1-&gt;4)-D-mannopyranose. Its activity is regulated as follows. Enhanced by Mg(2+) and Ca(2+) ions, ethylenediaminetetraacetic acid, ethylene glycol tetraacetic acid and citrate. Inhibited by Al(3+), Fe(3+), Co(2+), Cu(2+), Zn(2+), Pb(2+) and Ag(+) ions, iodoacetate, 4-chloromercuribenzoate and N-bromosuccinimide. In terms of biological role, catalyzes the reversible epimerization of cellobiose to 4-O-beta-D-glucopyranosyl-D-mannose (Glc-Man). Can also epimerize cellotriose to Glc-Glc-Man, cellotetraose to Glc-Glc-Glc-Man, and lactose to epilactose. The polypeptide is Cellobiose 2-epimerase (ce-ne1) (Ruminococcus albus).